The sequence spans 388 residues: Na(+)/H(+) antiporter NhaA (388 aa).

11 helical membrane-spanning segments follow: residues 14–34 (GGII…SGFT), 59–79 (MLLW…GLEV), 95–115 (AFPV…YLAF), 125–145 (GWAI…ALLG), 154–174 (IFLM…IALF), 179–199 (LSMV…VLNL), 219–239 (VLKS…FIPL), 254–274 (VLHP…NAGV), 287–307 (ILPL…ISLF), 328–348 (IMAV…IASL), and 356–376 (ALIN…AVIG).

It belongs to the NhaA Na(+)/H(+) (TC 2.A.33) antiporter family.

Its subcellular location is the cell inner membrane. It catalyses the reaction Na(+)(in) + 2 H(+)(out) = Na(+)(out) + 2 H(+)(in). In terms of biological role, na(+)/H(+) antiporter that extrudes sodium in exchange for external protons. The polypeptide is Na(+)/H(+) antiporter NhaA (Citrobacter koseri (strain ATCC BAA-895 / CDC 4225-83 / SGSC4696)).